Reading from the N-terminus, the 73-residue chain is Sec-independent protein translocase protein TatA (73 aa).

Residues 1–21 (MGSFSIWHWLIVLVIVMLVFG) traverse the membrane as a helical segment. A disordered region spans residues 43 to 73 (MKEGDDKAAPAKELRDSTTIDVDAKEKTRQQ).

It belongs to the TatA/E family. The Tat system comprises two distinct complexes: a TatABC complex, containing multiple copies of TatA, TatB and TatC subunits, and a separate TatA complex, containing only TatA subunits. Substrates initially bind to the TatABC complex, which probably triggers association of the separate TatA complex to form the active translocon.

Its subcellular location is the cell inner membrane. In terms of biological role, part of the twin-arginine translocation (Tat) system that transports large folded proteins containing a characteristic twin-arginine motif in their signal peptide across membranes. TatA could form the protein-conducting channel of the Tat system. The protein is Sec-independent protein translocase protein TatA of Cupriavidus pinatubonensis (strain JMP 134 / LMG 1197) (Cupriavidus necator (strain JMP 134)).